Consider the following 186-residue polypeptide: Nascent polypeptide-associated complex subunit beta (186 aa).

The NAC-A/B domain occupies 65–130; sequence GADDKKLQTT…GEEKELTELV (66 aa). Residues 153-186 are disordered; the sequence is QNMQKQAGAEGKKDEDEDDIPDLVEGENFESNVE. Residues 167-186 show a composition bias toward acidic residues; the sequence is EDEDDIPDLVEGENFESNVE.

It belongs to the NAC-beta family. Part of the nascent polypeptide-associated complex (NAC), consisting of egd2 and egd1. NAC associates with ribosomes via egd1.

Its subcellular location is the cytoplasm. It is found in the nucleus. Its function is as follows. Component of the nascent polypeptide-associated complex (NAC), a dynamic component of the ribosomal exit tunnel, protecting the emerging polypeptides from interaction with other cytoplasmic proteins to ensure appropriate nascent protein targeting. The NAC complex also promotes mitochondrial protein import by enhancing productive ribosome interactions with the outer mitochondrial membrane and blocks the inappropriate interaction of ribosomes translating non-secretory nascent polypeptides with translocation sites in the membrane of the endoplasmic reticulum. EGD1 may act as a transcription factor that exert a negative effect on the expression of several genes that are transcribed by RNA polymerase II. This is Nascent polypeptide-associated complex subunit beta (egd1) from Aspergillus fumigatus (strain ATCC MYA-4609 / CBS 101355 / FGSC A1100 / Af293) (Neosartorya fumigata).